The following is a 653-amino-acid chain: Threonine--tRNA ligase (653 aa).

In terms of domain architecture, TGS spans 1–61; that stretch reads MIKITFPDGN…NEDAEVKLFK (61 aa). The interval 243-542 is catalytic; it reads DHRKIGKELE…LIEHTAGKFP (300 aa). Zn(2+) contacts are provided by Cys338, His389, and His519.

This sequence belongs to the class-II aminoacyl-tRNA synthetase family. As to quaternary structure, homodimer. The cofactor is Zn(2+).

The protein localises to the cytoplasm. The catalysed reaction is tRNA(Thr) + L-threonine + ATP = L-threonyl-tRNA(Thr) + AMP + diphosphate + H(+). Functionally, catalyzes the attachment of threonine to tRNA(Thr) in a two-step reaction: L-threonine is first activated by ATP to form Thr-AMP and then transferred to the acceptor end of tRNA(Thr). Also edits incorrectly charged L-seryl-tRNA(Thr). The protein is Threonine--tRNA ligase of Porphyromonas gingivalis (strain ATCC BAA-308 / W83).